The sequence spans 424 residues: Enolase (424 aa).

Residue Q162 participates in (2R)-2-phosphoglycerate binding. Catalysis depends on E204, which acts as the Proton donor. Mg(2+) contacts are provided by D241, E284, and D311. (2R)-2-phosphoglycerate-binding residues include K336, R365, S366, and K387. The active-site Proton acceptor is the K336.

Belongs to the enolase family. Requires Mg(2+) as cofactor.

Its subcellular location is the cytoplasm. It is found in the secreted. It localises to the cell surface. It catalyses the reaction (2R)-2-phosphoglycerate = phosphoenolpyruvate + H2O. It participates in carbohydrate degradation; glycolysis; pyruvate from D-glyceraldehyde 3-phosphate: step 4/5. Its function is as follows. Catalyzes the reversible conversion of 2-phosphoglycerate (2-PG) into phosphoenolpyruvate (PEP). It is essential for the degradation of carbohydrates via glycolysis. This is Enolase from Sinorhizobium fredii (strain NBRC 101917 / NGR234).